The chain runs to 162 residues: Protein cornichon homolog 2 (162 aa).

Topologically, residues 1–10 (MAFTFAAFCY) are cytoplasmic. The helical transmembrane segment at 11 to 31 (MLTLVLCASLIFFIIWHIIAF) threads the bilayer. Over 32 to 72 (DELRTDFKNPIEQGNPSRARERVKNVERICCLLRKLVVPEY) the chain is Lumenal. Residues 73–93 (CIHGLFCLMFMCAAEWVTLGL) traverse the membrane as a helical segment. The Cytoplasmic portion of the chain corresponds to 94-138 (NIPLLFYHLWRYFHRPADGSEVMFDPVSIMNVDILNYCQKEAWCK). A helical membrane pass occupies residues 139–161 (LAFYLLSFFYYLYRVGATVRYVS). Residue A162 is a topological domain, lumenal.

The protein belongs to the cornichon family.

The protein localises to the membrane. Regulates the trafficking and gating properties of AMPA-selective glutamate receptors (AMPARs). The polypeptide is Protein cornichon homolog 2 (cnih2) (Xenopus tropicalis (Western clawed frog)).